Here is an 887-residue protein sequence, read N- to C-terminus: Putative RNA-binding protein 15B (887 aa).

A disordered region spans residues 1–132; the sequence is MKRQSERDSS…EPAGPGSTAA (132 aa). Residues 10–20 are compositionally biased toward low complexity; that stretch reads SPSGRGSSSSA. Basic and acidic residues-rich tracts occupy residues 22-34 and 65-77; these read RPRE…EAGG and GHRD…DANH. Positions 83–94 are enriched in gly residues; sequence RSSGAPGGGGRT. Positions 95–110 are enriched in low complexity; the sequence is GKASGDPGAGGASPRA. 2 positions are modified to phosphoserine: Ser-107 and Ser-111. The span at 111–122 shows a compositional bias: pro residues; that stretch reads SPLPPPPPPPGA. A compositionally biased stretch (low complexity) spans 123–132; it reads EPAGPGSTAA. The 81-residue stretch at 136 to 216 folds into the RRM 1 domain; it reads KTLLISSLSP…RPLKVEPVYL (81 aa). Lys-210 is covalently cross-linked (Glycyl lysine isopeptide (Lys-Gly) (interchain with G-Cter in SUMO2)). The disordered stretch occupies residues 215–249; that stretch reads YLRGGGSSRRSSSSSAAASTPPPGPPAPADPLGYL. Positions 222–233 are enriched in low complexity; sequence SRRSSSSSAAAS. A compositionally biased stretch (pro residues) spans 234–243; sequence TPPPGPPAPA. Residues Ser-261 and Ser-263 each carry the phosphoserine modification. RRM domains lie at 333 to 410 and 414 to 488; these read RNLF…YGKA and TRLW…FAKA. Thr-529 is modified (phosphothreonine). 3 positions are modified to phosphoserine: Ser-549, Ser-553, and Ser-559. The interval 549 to 703 is disordered; it reads SLSKSSDRRN…TLEEPKHETK (155 aa). 3 stretches are compositionally biased toward basic and acidic residues: residues 570 to 613, 623 to 643, and 668 to 700; these read RSGE…ERSR, RGSD…EGTK, and EAPD…EPKH. Residues 590–594 carry the Nuclear localization signal motif; that stretch reads RRKRR. Lys-699 is covalently cross-linked (Glycyl lysine isopeptide (Lys-Gly) (interchain with G-Cter in SUMO2)). The SPOC domain maps to 708-886; that stretch reads LSEYAQTLQL…HMVIVIVRDT (179 aa). Positions 719–887 are interaction with Epstein-Barr virus BMLF1; it reads WNGLLVLKNS…MVIVIVRDTA (169 aa).

It belongs to the RRM Spen family. Component of the WMM complex, a N6-methyltransferase complex composed of a catalytic subcomplex, named MAC, and of an associated subcomplex, named MACOM. The MAC subcomplex is composed of METTL3 and METTL14. The MACOM subcomplex is composed of WTAP, ZC3H13, CBLL1/HAKAI, VIRMA, and, in some cases of RBM15 (RBM15 or RBM15B). May interact with NCOR2. Interacts with NXF1, the interaction is required to promote mRNA export.

The protein localises to the nucleus. The protein resides in the nucleoplasm. It is found in the nucleus speckle. Its subcellular location is the nucleus envelope. In terms of biological role, RNA-binding protein that acts as a key regulator of N6-methyladenosine (m6A) methylation of RNAs, thereby regulating different processes, such as alternative splicing of mRNAs and X chromosome inactivation mediated by Xist RNA. Associated component of the WMM complex, a complex that mediates N6-methyladenosine (m6A) methylation of RNAs, a modification that plays a role in the efficiency of mRNA splicing and RNA processing. Plays a key role in m6A methylation, possibly by binding target RNAs and recruiting the WMM complex. Involved in random X inactivation mediated by Xist RNA: acts by binding Xist RNA and recruiting the WMM complex, which mediates m6A methylation, leading to target YTHDC1 reader on Xist RNA and promoting transcription repression activity of Xist. Functions in the regulation of alternative or illicit splicing, possibly by regulating m6A methylation. Inhibits pre-mRNA splicing. Also functions as a mRNA export factor by acting as a cofactor for the nuclear export receptor NXF1. This Mus musculus (Mouse) protein is Putative RNA-binding protein 15B (Rbm15b).